Consider the following 393-residue polypeptide: BEN domain-containing protein 5 (393 aa).

Positions 169–212 form a coiled coil; that stretch reads RVLYEELLRSYQQQQQEMKHIQHELERTRKQLVQQAKKLKDYGS. The region spanning 274–380 is the BEN domain; sequence GSGVWVNEEK…EKIMDINKSC (107 aa).

Functionally, may act as a transcriptional repressor. The protein is BEN domain-containing protein 5 (bend5) of Xenopus laevis (African clawed frog).